A 225-amino-acid polypeptide reads, in one-letter code: RNA-binding protein 24 (225 aa).

In terms of domain architecture, RRM spans 11 to 88 (TKIFVGGLPY…RKANVNLAYL (78 aa)).

The protein resides in the nucleus. The protein localises to the cytoplasm. Functionally, multifunctional RNA-binding protein involved in the regulation of pre-mRNA splicing, mRNA stability and mRNA translation important for cell fate decision and differentiation. Plays a major role in pre-mRNA alternative splicing regulation. Mediates preferentially muscle-specific exon inclusion in numerous mRNAs important for striated cardiac and skeletal muscle cell differentiation. Binds to intronic splicing enhancer (ISE) composed of stretches of GU-rich motifs localized in flanking intron of exon that will be included by alternative splicing. Involved in embryonic stem cell (ESC) transition to cardiac cell differentiation by promoting pre-mRNA alternative splicing events of several pluripotency and/or differentiation genes. Plays a role in the regulation of mRNA stability and mRNA translation to which it is bound. Involved in myogenic differentiation by regulating MYOG levels. Binds to a huge amount of mRNAs. Involved in embryonic heart development and myogenic differentiation of somitic muscle progenitors. The chain is RNA-binding protein 24 from Gallus gallus (Chicken).